A 158-amino-acid polypeptide reads, in one-letter code: MLVPPPNYGMVEENFYRSGQPDQLNFPFLEKLGLKSVIWLAPEEPEPGFLDFCVDQNIELHHLGVLYSTNAWDPITEEVVLQALHLLVQPATYPVLVMCNLGRHRTGTVVGCFRKLQRWNLSAILEEYRRFVGGQKYRILNEQFIELFDEELVFGASY.

The 152-residue stretch at 7 to 158 folds into the Tyrosine-protein phosphatase domain; that stretch reads NYGMVEENFY…DEELVFGASY (152 aa). Cys99 functions as the Phosphocysteine intermediate in the catalytic mechanism.

Belongs to the protein-tyrosine phosphatase family.

The protein localises to the cytoplasm. The catalysed reaction is O-phospho-L-tyrosyl-[protein] + H2O = L-tyrosyl-[protein] + phosphate. Putative tyrosine-protein phosphatase required for protection against superoxide stress. This Mycosarcoma maydis (Corn smut fungus) protein is Putative tyrosine-protein phosphatase OCA1 (OCA1).